The primary structure comprises 83 residues: Neurotoxin LmNaTx3 (83 aa).

The first 21 residues, 1–21, serve as a signal peptide directing secretion; sequence MQLKIQLLMLVLMIVLTDVYS. The LCN-type CS-alpha/beta domain maps to 22–83; sequence KDGFIVSKKN…NIAMKNKNYC (62 aa). Intrachain disulfides connect Cys-32-Cys-83, Cys-36-Cys-59, Cys-45-Cys-64, and Cys-49-Cys-66.

It belongs to the long (4 C-C) scorpion toxin superfamily. Sodium channel inhibitor family. Alpha subfamily. In terms of tissue distribution, expressed by the venom gland.

The protein localises to the secreted. In terms of biological role, binds voltage-independently at site-3 of voltage-gated sodium channels (Nav) and inhibits the inactivation of the activated channels, thereby blocking neuronal transmission. In Lychas mucronatus (Chinese swimming scorpion), this protein is Neurotoxin LmNaTx3.